The following is a 1002-amino-acid chain: Hypoxia up-regulated protein 1 (1002 aa).

The first 23 residues, 1-23 (MARAPRWMLGWLLLACCVPHTEP), serve as a signal peptide directing secretion. Disordered stretches follow at residues 576-698 (LFGG…PKKQ) and 918-1002 (KPKP…NDEL). Residues 643–675 (PPKEESQKNEEGEKSEARDPKEDKETVNEEELS) show a composition bias toward basic and acidic residues. Polar residues predominate over residues 933-947 (GKNATGTSESENTIP). Composition is skewed to basic and acidic residues over residues 951–962 (GKQEEKPEDISP) and 983–1002 (SSKKEKKPEAGGESRKNDEL). The Prevents secretion from ER signature appears at 999-1002 (NDEL).

Belongs to the heat shock protein 70 family.

The protein resides in the endoplasmic reticulum lumen. Has a pivotal role in cytoprotective cellular mechanisms triggered by oxygen deprivation. Promotes HSPA5/BiP-mediated ATP nucleotide exchange and thereby activates the unfolded protein response (UPR) pathway in the presence of endoplasmic reticulum stress. May play a role as a molecular chaperone and participate in protein folding. The chain is Hypoxia up-regulated protein 1 (HYOU1) from Gallus gallus (Chicken).